We begin with the raw amino-acid sequence, 332 residues long: 2,3-diketo-L-gulonate reductase (332 aa).

H44 acts as the Proton donor in catalysis. Residues 168–174 (ITMVDMS), 224–225 (WK), and 304–306 (GHE) each bind NAD(+).

This sequence belongs to the LDH2/MDH2 oxidoreductase family. DlgD subfamily. In terms of assembly, homodimer.

It localises to the cytoplasm. The catalysed reaction is 3-dehydro-L-gulonate + NAD(+) = 2,3-dioxo-L-gulonate + NADH + H(+). It carries out the reaction 3-dehydro-L-gulonate + NADP(+) = 2,3-dioxo-L-gulonate + NADPH + H(+). Its function is as follows. Catalyzes the reduction of 2,3-diketo-L-gulonate in the presence of NADH, to form 3-keto-L-gulonate. This Klebsiella pneumoniae (strain 342) protein is 2,3-diketo-L-gulonate reductase.